The chain runs to 206 residues: Small ribosomal subunit protein uS4 (206 aa).

The S4 RNA-binding domain maps to 96–156; it reads TRLDNVVYRM…EKSRTQARIK (61 aa).

Belongs to the universal ribosomal protein uS4 family. As to quaternary structure, part of the 30S ribosomal subunit. Contacts protein S5. The interaction surface between S4 and S5 is involved in control of translational fidelity.

One of the primary rRNA binding proteins, it binds directly to 16S rRNA where it nucleates assembly of the body of the 30S subunit. In terms of biological role, with S5 and S12 plays an important role in translational accuracy. The sequence is that of Small ribosomal subunit protein uS4 from Shewanella amazonensis (strain ATCC BAA-1098 / SB2B).